Reading from the N-terminus, the 489-residue chain is Betaine aldehyde dehydrogenase (489 aa).

T26 and D93 together coordinate K(+). Residue 150 to 152 coordinates NAD(+); that stretch reads GAW. K162 acts as the Charge relay system in catalysis. 176–179 serves as a coordination point for NAD(+); that stretch reads KPSE. A K(+)-binding site is contributed by V180. 229–232 serves as a coordination point for NAD(+); it reads GVET. L245 is a K(+) binding site. Residue E251 is the Proton acceptor of the active site. NAD(+) contacts are provided by G253, C285, and E386. C285 (nucleophile) is an active-site residue. Residue C285 is modified to Cysteine sulfenic acid (-SOH). 2 residues coordinate K(+): K456 and G459. The active-site Charge relay system is E463.

It belongs to the aldehyde dehydrogenase family. Dimer of dimers. The cofactor is K(+).

It carries out the reaction betaine aldehyde + NAD(+) + H2O = glycine betaine + NADH + 2 H(+). The protein operates within amine and polyamine biosynthesis; betaine biosynthesis via choline pathway; betaine from betaine aldehyde: step 1/1. Its function is as follows. Involved in the biosynthesis of the osmoprotectant glycine betaine. Catalyzes the irreversible oxidation of betaine aldehyde to the corresponding acid. The polypeptide is Betaine aldehyde dehydrogenase (Burkholderia vietnamiensis (strain G4 / LMG 22486) (Burkholderia cepacia (strain R1808))).